The primary structure comprises 794 residues: MHVIKRDGGQEGVMFDKITSRIQKLCYGLNSDFVDPTQITMKVIQGLYSGVTTVELDTLAAETAATSTTKHPDYAILAARIAVSNLHKETKKVFSEVMEDLYNYVNPLNSRHSPMISKETLDIVLANKDRLNSAIIYDRDFSYNFFGFKTLERSYLLKINGKVAERPQHMLMRVSVGIHKEDIAAAIETYNLLSEKWFTHASPTLFNAGTNRPQLSSCFLLAMKDDSIEGIYDTLKQCALISKSAGGIGVAVSCIRATGRYIAGTNGNSNGLVPMLRVNNNTARYVDQGGNKRPGAFAMYLEPWHFDIFDFLELKKNTGKEEQRARDLFYALWIPDLFMKRVETNGDWSLMCPNDCPGLDECWGEEFEKLYAKYEQEGRAKRVVKAQQLWYAIIESQTETGTPYMLYKDACNRKSNRQNLGTIKCSNLCTEIVEYTSADEVAVCNLASIALNMYVTSERTFDFQKLASVTKVIVKNLNKIIDINYYPVKEAENSNKRHRPIGIGVQGLADAFILMRFPFESTEAQLLNTQIFETIYYAALESSCELAAEYGPYQTYAGCPVSKGILQYDMWEKTPTDLWDWAALKEKIANDGVRNSLLLAPMPTASTAQILGNNESIEPYTSNIYHRRVLSGEFQIVNPHLLKDLTERGLWNEEMKNQIIAQNGSIQTIPAIPDDLKELYKTVWEISQKTILKMAADRGAYIDQSQSLNIHIAEPNYGKLTSMHFYGWKQGLKTGMYYLRTKPGANPIQFTLNKEKLKETQKTTSSEDEETKERNKAAMVCSLENRHECLMCGS.

In terms of domain architecture, ATP-cone spans 1 to 92 (MHVIKRDGGQ…VSNLHKETKK (92 aa)). ATP-binding positions include 5–6 (KR), 11–17 (EGVMFDK), Thr53, and Asp57. The GDP site is built by Ser202 and Ser217. A disulfide bridge connects residues Cys218 and Cys444. DTTP contacts are provided by residues 226-228 (DSI), Lys243, Arg256, and 263-264 (AG). Residue Asn427 coordinates GDP. Asn427 serves as the catalytic Proton acceptor. Cys429 functions as the Cysteine radical intermediate in the catalytic mechanism. Residues Glu431 and 604–607 (TAST) each bind GDP. Glu431 acts as the Proton acceptor in catalysis.

The protein belongs to the ribonucleoside diphosphate reductase large chain family. Heterodimer of a large and a small subunit.

Its subcellular location is the cytoplasm. The enzyme catalyses a 2'-deoxyribonucleoside 5'-diphosphate + [thioredoxin]-disulfide + H2O = a ribonucleoside 5'-diphosphate + [thioredoxin]-dithiol. Its activity is regulated as follows. Under complex allosteric control mediated by deoxynucleoside triphosphates and ATP binding to separate specificity and activation sites on the M1 subunit. The type of nucleotide bound at the specificity site determines substrate preference. It seems probable that ATP makes the enzyme reduce CDP and UDP, dGTP favors ADP reduction and dTTP favors GDP reduction. Stimulated by ATP and inhibited by dATP binding to the activity site. Its function is as follows. Provides the precursors necessary for DNA synthesis. Catalyzes the biosynthesis of deoxyribonucleotides from the corresponding ribonucleotides. The chain is Ribonucleoside-diphosphate reductase large subunit (rrm1) from Danio rerio (Zebrafish).